We begin with the raw amino-acid sequence, 327 residues long: GTP 3',8-cyclase (327 aa).

Residues 21–233 (SYGRRIRKLR…AKIQQKYSLK (213 aa)) form the Radical SAM core domain. GTP is bound at residue Arg-30. Residues Cys-37 and Cys-41 each coordinate [4Fe-4S] cluster. Position 43 (Tyr-43) interacts with S-adenosyl-L-methionine. Cys-44 provides a ligand contact to [4Fe-4S] cluster. Residue Arg-79 participates in GTP binding. Gly-83 is a binding site for S-adenosyl-L-methionine. Position 109 (Thr-109) interacts with GTP. Ser-133 lines the S-adenosyl-L-methionine pocket. Lys-169 serves as a coordination point for GTP. Met-203 serves as a coordination point for S-adenosyl-L-methionine. 2 residues coordinate [4Fe-4S] cluster: Cys-265 and Cys-268. 270–272 (RWR) lines the GTP pocket. Position 282 (Cys-282) interacts with [4Fe-4S] cluster.

The protein belongs to the radical SAM superfamily. MoaA family. Monomer and homodimer. [4Fe-4S] cluster serves as cofactor.

It carries out the reaction GTP + AH2 + S-adenosyl-L-methionine = (8S)-3',8-cyclo-7,8-dihydroguanosine 5'-triphosphate + 5'-deoxyadenosine + L-methionine + A + H(+). The protein operates within cofactor biosynthesis; molybdopterin biosynthesis. Catalyzes the cyclization of GTP to (8S)-3',8-cyclo-7,8-dihydroguanosine 5'-triphosphate. The protein is GTP 3',8-cyclase of Synechocystis sp. (strain ATCC 27184 / PCC 6803 / Kazusa).